We begin with the raw amino-acid sequence, 300 residues long: D-alanine--D-alanine ligase (300 aa).

The ATP-grasp domain maps to 99–293; that stretch reads KKILKYANIN…FAELLNSIVK (195 aa). 126-181 lines the ATP pocket; it reads IEKIGYPVFVKPNSGGSSVATNLVKDKEGIKEAVELALKYDKEVMIENYTKGEEIT. The Mg(2+) site is built by D248, E260, and N262.

This sequence belongs to the D-alanine--D-alanine ligase family. The cofactor is Mg(2+). Mn(2+) serves as cofactor.

It localises to the cytoplasm. It carries out the reaction 2 D-alanine + ATP = D-alanyl-D-alanine + ADP + phosphate + H(+). Its pathway is cell wall biogenesis; peptidoglycan biosynthesis. Cell wall formation. This Clostridium botulinum (strain Langeland / NCTC 10281 / Type F) protein is D-alanine--D-alanine ligase.